The sequence spans 542 residues: POTE ankyrin domain family member C (542 aa).

ANK repeat units follow at residues 138–171 (EDLD…KRDK), 172–201 (QKRT…QLNV), 205–234 (KKRT…DQNI), 238–267 (YGNT…DIES), 271–300 (CGLT…NLNA), 304–333 (YGRT…DVSS), and 337–373 (SGQT…SENS). A disordered region spans residues 369–494 (SSENSNPEQD…NTGISQDEIL (126 aa)). 3 stretches are compositionally biased toward basic and acidic residues: residues 377 to 392 (QDLK…RLKV), 401 to 412 (MSQEPEINKDCD), and 466 to 481 (EEYH…KQLS). The segment covering 482 to 494 (EEQNTGISQDEIL) has biased composition (polar residues). A coiled-coil region spans residues 489 to 538 (SQDEILTNKQKQIEVAEKKMNSELSLSHKKEEDLLRENSMLQEEIAMLIS).

Belongs to the POTE family. In terms of tissue distribution, expressed in prostate and testis.

The sequence is that of POTE ankyrin domain family member C (POTEC) from Homo sapiens (Human).